The primary structure comprises 465 residues: VGFKAGVKDYKLTYYTPEYETKHTDILAAFRVTPQPGVPPEEAGAAVAAESSTGTWTTVWTDGLTNLDRYKGRCYHIEPVAGEESQFIAYVAYPLDLFEEGSVTNMLTSIVGNVFGFKALRSLRLEDLRIPVAYAKTFQGPPHGIQVEGDKLNKYGRPLLGCTIKPKLGLSAKNYGRAVYECLRGGLDFTKDDENVNSQPFMRWRDRFVFCAEAIYKAQAETGEIKGHYLNATAGTCEEMMKRAVFARELGVPIIMHDYLTGGFTANTSLAHYCRDNGLLLHIHRAMHAVIDRQKNHGMHFRVLAKALRMSGGDHIHAGTVVGKLEGERDITLGFVDLLRDDYIEKDRSPGIYFSQDWVSLAGVLPVASGGIHVWHMPALTEIFGDDSVLQFGGGTLGHPWGNAPGAVANRVALEACVQARNEGRDLAREGNEIIREASKWSPELAAACEVWKEIKFEFPAMDTL.

Position 4 is an N6,N6,N6-trimethyllysine (Lys4). Residues Asn113 and Thr163 each coordinate substrate. The active-site Proton acceptor is Lys165. Lys167 contacts substrate. Positions 191, 193, and 194 each coordinate Mg(2+). Residue Lys191 is modified to N6-carboxylysine. Catalysis depends on His284, which acts as the Proton acceptor. Substrate-binding residues include Arg285, His317, and Ser369.

The protein belongs to the RuBisCO large chain family. Type I subfamily. Heterohexadecamer of 8 large chains and 8 small chains; disulfide-linked. The disulfide link is formed within the large subunit homodimers. It depends on Mg(2+) as a cofactor. The disulfide bond which can form in the large chain dimeric partners within the hexadecamer appears to be associated with oxidative stress and protein turnover.

It is found in the plastid. The protein localises to the chloroplast. It carries out the reaction 2 (2R)-3-phosphoglycerate + 2 H(+) = D-ribulose 1,5-bisphosphate + CO2 + H2O. The enzyme catalyses D-ribulose 1,5-bisphosphate + O2 = 2-phosphoglycolate + (2R)-3-phosphoglycerate + 2 H(+). Its function is as follows. RuBisCO catalyzes two reactions: the carboxylation of D-ribulose 1,5-bisphosphate, the primary event in carbon dioxide fixation, as well as the oxidative fragmentation of the pentose substrate in the photorespiration process. Both reactions occur simultaneously and in competition at the same active site. In Cyrilla racemiflora (Swamp titi), this protein is Ribulose bisphosphate carboxylase large chain.